Reading from the N-terminus, the 145-residue chain is Large ribosomal subunit protein uL16 (145 aa).

Over residues 76–95 (PKTKTPAETRMGKGKGEPEH) the composition is skewed to basic and acidic residues. Positions 76-97 (PKTKTPAETRMGKGKGEPEHFV) are disordered.

This sequence belongs to the universal ribosomal protein uL16 family. Part of the 50S ribosomal subunit.

Binds 23S rRNA and is also seen to make contacts with the A and possibly P site tRNAs. The sequence is that of Large ribosomal subunit protein uL16 from Salinibacter ruber (strain DSM 13855 / M31).